The sequence spans 215 residues: Large ribosomal subunit protein uL3c (215 aa).

The disordered stretch occupies residues 132 to 151 (RGAMSHGSKSHRRPGSIGAG).

The protein belongs to the universal ribosomal protein uL3 family. In terms of assembly, part of the 50S ribosomal subunit.

The protein localises to the plastid. Its subcellular location is the chloroplast. Its function is as follows. One of the primary rRNA binding proteins, it binds directly near the 3'-end of the 23S rRNA, where it nucleates assembly of the 50S subunit. The sequence is that of Large ribosomal subunit protein uL3c (rpl3) from Cyanidium caldarium (Red alga).